A 387-amino-acid chain; its full sequence is Short-chain dehydrogenase/reductase family 42E member 1 (387 aa).

Catalysis depends on Tyr-149, which acts as the Proton acceptor. Residue Lys-153 participates in NAD(+) binding. 2 consecutive transmembrane segments (helical) span residues 279-299 (LPISMIYFFAFLTEMVHFVVG) and 365-385 (ILDVFVVVAFVAVLLSCLPVV).

This sequence belongs to the 3-beta-HSD family.

The protein resides in the membrane. This chain is Short-chain dehydrogenase/reductase family 42E member 1 (sdr42e1), found in Danio rerio (Zebrafish).